The following is a 274-amino-acid chain: Large ribosomal subunit protein uL2c (274 aa).

A disordered region spans residues His-230–Lys-252.

It belongs to the universal ribosomal protein uL2 family. In terms of assembly, part of the 50S ribosomal subunit.

It localises to the plastid. The polypeptide is Large ribosomal subunit protein uL2c (rpl2) (Euglena longa (Euglenophycean alga)).